A 616-amino-acid chain; its full sequence is Dihydroxy-acid dehydratase 1 (616 aa).

Residue Asp-81 participates in Mg(2+) binding. Residue Cys-122 coordinates [2Fe-2S] cluster. Residues Asp-123 and Lys-124 each contribute to the Mg(2+) site. Lys-124 carries the N6-carboxylysine modification. Position 195 (Cys-195) interacts with [2Fe-2S] cluster. Glu-491 serves as a coordination point for Mg(2+). Ser-517 (proton acceptor) is an active-site residue.

It belongs to the IlvD/Edd family. As to quaternary structure, homodimer. [2Fe-2S] cluster serves as cofactor. Mg(2+) is required as a cofactor.

It catalyses the reaction (2R)-2,3-dihydroxy-3-methylbutanoate = 3-methyl-2-oxobutanoate + H2O. The catalysed reaction is (2R,3R)-2,3-dihydroxy-3-methylpentanoate = (S)-3-methyl-2-oxopentanoate + H2O. Its pathway is amino-acid biosynthesis; L-isoleucine biosynthesis; L-isoleucine from 2-oxobutanoate: step 3/4. It functions in the pathway amino-acid biosynthesis; L-valine biosynthesis; L-valine from pyruvate: step 3/4. In terms of biological role, functions in the biosynthesis of branched-chain amino acids. Catalyzes the dehydration of (2R,3R)-2,3-dihydroxy-3-methylpentanoate (2,3-dihydroxy-3-methylvalerate) into 2-oxo-3-methylpentanoate (2-oxo-3-methylvalerate) and of (2R)-2,3-dihydroxy-3-methylbutanoate (2,3-dihydroxyisovalerate) into 2-oxo-3-methylbutanoate (2-oxoisovalerate), the penultimate precursor to L-isoleucine and L-valine, respectively. In Bradyrhizobium diazoefficiens (strain JCM 10833 / BCRC 13528 / IAM 13628 / NBRC 14792 / USDA 110), this protein is Dihydroxy-acid dehydratase 1.